Consider the following 96-residue polypeptide: ATP-dependent Clp protease adapter protein ClpS (96 aa).

This sequence belongs to the ClpS family. In terms of assembly, binds to the N-terminal domain of the chaperone ClpA.

Its function is as follows. Involved in the modulation of the specificity of the ClpAP-mediated ATP-dependent protein degradation. The chain is ATP-dependent Clp protease adapter protein ClpS from Campylobacter jejuni subsp. jejuni serotype O:6 (strain 81116 / NCTC 11828).